Reading from the N-terminus, the 656-residue chain is DNA topoisomerase 3 (656 aa).

In terms of domain architecture, Toprim spans 2–156; the sequence is KVLCVAEKNS…QVYRAVFSHL (155 aa). The region spanning 172–635 is the Topo IA-type catalytic domain; it reads DMKSVHAVGT…DIVEKYRKYW (464 aa). Catalysis depends on Y356, which acts as the O-(5'-phospho-DNA)-tyrosine intermediate.

The protein belongs to the type IA topoisomerase family. In terms of assembly, forms a complex with SGS1 and RMI1. Interacts with SGS1.

It catalyses the reaction ATP-independent breakage of single-stranded DNA, followed by passage and rejoining.. Releases the supercoiling and torsional tension of DNA introduced during the DNA replication and transcription by transiently cleaving and rejoining one strand of the DNA duplex. Introduces a single-strand break via transesterification at a target site in duplex DNA. The scissile phosphodiester is attacked by the catalytic tyrosine of the enzyme, resulting in the formation of a DNA-(5'-phosphotyrosyl)-enzyme intermediate and the expulsion of a 3'-OH DNA strand. The free DNA strand than undergoes passage around the unbroken strand thus removing DNA supercoils. Finally, in the religation step, the DNA 3'-OH attacks the covalent intermediate to expel the active-site tyrosine and restore the DNA phosphodiester backbone. Essential for proper chromosome segregation in both meiosis and mitosis. Weakly relaxes negative supercoils and displays a distinct preference for binding single-stranded DNA. The TOP3-SGS1 protein complex may function as a eukaryotic reverse gyrase introducing positive supercoils into extrachromosomal ribosomal DNA rings. The sequence is that of DNA topoisomerase 3 (TOP3) from Saccharomyces cerevisiae (strain ATCC 204508 / S288c) (Baker's yeast).